The sequence spans 172 residues: R-phycocyanin-2 beta chain (172 aa).

Asn72 is subject to N4-methylasparagine. Cys82 is a (2R,3E)-phycocyanobilin binding site. Residue Cys153 coordinates (2R,3E)-phycoerythrobilin.

This sequence belongs to the phycobiliprotein family. Heterodimer of an alpha and a beta chain. Contains two covalently linked bilin chromophores.

It localises to the cellular thylakoid membrane. Its function is as follows. Light-harvesting photosynthetic bile pigment-protein from the phycobiliprotein complex. The protein is R-phycocyanin-2 beta chain (rpcB) of Synechococcus sp. (strain WH8020).